The primary structure comprises 368 residues: Alkaline phosphatase L (368 aa).

The N-terminal stretch at 1-23 (MFKRSLIAASLSVAALVSAQAMA) is a signal peptide.

Belongs to the PstS family. As to quaternary structure, homodimer.

It is found in the secreted. The protein localises to the periplasm. It catalyses the reaction a phosphate monoester + H2O = an alcohol + phosphate. Functionally, has both a phosphomonoesterase and phosphodiesterase activity. This Pseudomonas aeruginosa (strain ATCC 15692 / DSM 22644 / CIP 104116 / JCM 14847 / LMG 12228 / 1C / PRS 101 / PAO1) protein is Alkaline phosphatase L.